The primary structure comprises 777 residues: Zinc finger FYVE domain-containing protein 1 (777 aa).

The segment at 416–777 is required for localization in the lipid droplets; sequence MAHSSFFPDE…FNCNKKPGDL (362 aa). 2 consecutive FYVE-type zinc fingers follow at residues 598-659 and 715-775; these read NSQI…DARN and DHEI…KKPG. The Zn(2+) site is built by Cys604, Cys607, Cys620, Cys623, Cys628, Cys631, Cys651, Cys654, Cys721, Cys724, Cys737, Cys740, Cys745, Cys748, Cys767, and Cys770.

Interacts with RAB18 (in GTP-bound form). Interacts with BSCL2 in a RAB18-dependent manner. Interacts with ZW10. In terms of tissue distribution, ubiquitous.

It is found in the golgi apparatus. The protein resides in the golgi stack. The protein localises to the endoplasmic reticulum. It localises to the preautophagosomal structure. Its subcellular location is the lipid droplet. It is found in the mitochondrion. Plays a role in the formation of lipid droplets (LDs) which are storage organelles at the center of lipid and energy homeostasis. Regulates the morphology, size and distribution of LDs. Mediates the formation of endoplasmic reticulum-lipid droplets (ER-LD) contact sites by forming a complex with RAB18 and ZW10. Binds to phosphatidylinositol 3-phosphate (PtdIns3P) through FYVE-type zinc finger. The protein is Zinc finger FYVE domain-containing protein 1 (Zfyve1) of Mus musculus (Mouse).